Reading from the N-terminus, the 316-residue chain is Glycerol-3-phosphate dehydrogenase [NAD(P)+] (316 aa).

Residues serine 14, phenylalanine 15, arginine 35, and lysine 109 each contribute to the NADPH site. Sn-glycerol 3-phosphate is bound by residues lysine 109 and glycine 137. Alanine 141 serves as a coordination point for NADPH. Sn-glycerol 3-phosphate is bound by residues lysine 192, aspartate 248, serine 258, arginine 259, and asparagine 260. Catalysis depends on lysine 192, which acts as the Proton acceptor. Arginine 259 contacts NADPH. Positions 283 and 285 each coordinate NADPH.

The protein belongs to the NAD-dependent glycerol-3-phosphate dehydrogenase family.

The protein resides in the cytoplasm. The catalysed reaction is sn-glycerol 3-phosphate + NAD(+) = dihydroxyacetone phosphate + NADH + H(+). The enzyme catalyses sn-glycerol 3-phosphate + NADP(+) = dihydroxyacetone phosphate + NADPH + H(+). The protein operates within membrane lipid metabolism; glycerophospholipid metabolism. Functionally, catalyzes the reduction of the glycolytic intermediate dihydroxyacetone phosphate (DHAP) to sn-glycerol 3-phosphate (G3P), the key precursor for phospholipid synthesis. This chain is Glycerol-3-phosphate dehydrogenase [NAD(P)+], found in Rickettsia prowazekii (strain Madrid E).